Here is a 234-residue protein sequence, read N- to C-terminus: Phosphoribosylaminoimidazole-succinocarboxamide synthase (234 aa).

The protein belongs to the SAICAR synthetase family.

The enzyme catalyses 5-amino-1-(5-phospho-D-ribosyl)imidazole-4-carboxylate + L-aspartate + ATP = (2S)-2-[5-amino-1-(5-phospho-beta-D-ribosyl)imidazole-4-carboxamido]succinate + ADP + phosphate + 2 H(+). It participates in purine metabolism; IMP biosynthesis via de novo pathway; 5-amino-1-(5-phospho-D-ribosyl)imidazole-4-carboxamide from 5-amino-1-(5-phospho-D-ribosyl)imidazole-4-carboxylate: step 1/2. The polypeptide is Phosphoribosylaminoimidazole-succinocarboxamide synthase (Streptococcus uberis (strain ATCC BAA-854 / 0140J)).